The primary structure comprises 79 residues: Small ribosomal subunit protein bS16c (79 aa).

Belongs to the bacterial ribosomal protein bS16 family.

The protein resides in the plastid. The protein localises to the chloroplast. This Thalassiosira pseudonana (Marine diatom) protein is Small ribosomal subunit protein bS16c.